A 332-amino-acid chain; its full sequence is Fructose-1,6-bisphosphatase class 1 (332 aa).

Mg(2+) is bound by residues glutamate 89, aspartate 110, leucine 112, and aspartate 113. Residues 113–116 (DGSS), asparagine 206, tyrosine 239, 257–259 (YLY), and lysine 269 contribute to the substrate site. Glutamate 275 serves as a coordination point for Mg(2+).

This sequence belongs to the FBPase class 1 family. In terms of assembly, homotetramer. The cofactor is Mg(2+).

The protein resides in the cytoplasm. It catalyses the reaction beta-D-fructose 1,6-bisphosphate + H2O = beta-D-fructose 6-phosphate + phosphate. The protein operates within carbohydrate biosynthesis; gluconeogenesis. In Klebsiella pneumoniae subsp. pneumoniae (strain ATCC 700721 / MGH 78578), this protein is Fructose-1,6-bisphosphatase class 1.